Reading from the N-terminus, the 83-residue chain is Ardiscretin (83 aa).

The first 20 residues, 1–20 (MKGMIMLISCLMLIDVVVES), serve as a signal peptide directing secretion. Residues 21 to 82 (KNGYIIEPKG…IFDYYNNKCG (62 aa)) form the LCN-type CS-alpha/beta domain. 4 cysteine pairs are disulfide-bonded: Cys-31–Cys-81, Cys-35–Cys-57, Cys-43–Cys-62, and Cys-47–Cys-64. Cys-81 carries the post-translational modification Cysteine amide.

In terms of tissue distribution, expressed by the venom gland.

Its subcellular location is the secreted. Functionally, inhibits the sodium (Nav) currents in an apparent irreversible manner. Produces small depolarization and induces repetitive firing in squid axons. Is specific for arthropods (crickets, triatomides, crabs and squids), but is non-toxic to mice. Shows antibacterial activity against both Gram-positive and Gram-negative bacteria. In Tityus discrepans (Venezuelan scorpion), this protein is Ardiscretin.